The primary structure comprises 451 residues: Cobalamin reductase PduS (451 aa).

4Fe-4S ferredoxin-type domains are found at residues 255–284 (TVLS…HELS) and 300–330 (PQLL…MRIN). 8 residues coordinate [4Fe-4S] cluster: C264, C267, C270, C274, C309, C312, C315, and C320.

This sequence belongs to the PduS cobalamin reductase family. In terms of assembly, monomeric when purified anaerobically, dimeric under aerobic conditions. Forms a complex with PduO. Interacts with PduT, probably via the N-terminus of PduS. The cofactor is [4Fe-4S] cluster. FMN is required as a cofactor.

The protein localises to the bacterial microcompartment. It functions in the pathway polyol metabolism; 1,2-propanediol degradation. A protein that aids in conversion of cob(III)alamin to cob(II)alamin and then to cob(I)alamin in the bacterial microcompartment (BMC) dedicated to 1,2-propanediol (1,2-PD) degradation. The latter step requires PduO. No free cob(I)alamin is released, suggesting a complex is formed with PduO that finishes conversion to adenosylcobalamin. PduS and PduO allow regeneration of the adenosylcobalamin cofactor within the BMC. Another study showed reduction of cob(II)alamin to cob(I)alamin in the absence of PduO. Both reactions require NADH. Cyanocobalamin (CN-Cbl) is not a substrate for the first reaction. Cobalamin reduction probably occurs spontaneously in the presence of free reduced flavin nucleotides, this protein may be involved in electron transfer for this reduction. Its function is as follows. The 1,2-PD-specific bacterial microcompartment (BMC) concentrates low levels of 1,2-PD catabolic enzymes, concentrates volatile reaction intermediates thus enhancing pathway flux and keeps the level of toxic, mutagenic propionaldehyde low. The protein is Cobalamin reductase PduS of Salmonella typhimurium (strain LT2 / SGSC1412 / ATCC 700720).